Here is a 71-residue protein sequence, read N- to C-terminus: NAD(P)H-quinone oxidoreductase subunit O (71 aa).

It belongs to the complex I NdhO subunit family. As to quaternary structure, NDH-1 can be composed of about 15 different subunits; different subcomplexes with different compositions have been identified which probably have different functions.

The protein localises to the cellular thylakoid membrane. The catalysed reaction is a plastoquinone + NADH + (n+1) H(+)(in) = a plastoquinol + NAD(+) + n H(+)(out). It carries out the reaction a plastoquinone + NADPH + (n+1) H(+)(in) = a plastoquinol + NADP(+) + n H(+)(out). Its function is as follows. NDH-1 shuttles electrons from an unknown electron donor, via FMN and iron-sulfur (Fe-S) centers, to quinones in the respiratory and/or the photosynthetic chain. The immediate electron acceptor for the enzyme in this species is believed to be plastoquinone. Couples the redox reaction to proton translocation, and thus conserves the redox energy in a proton gradient. Cyanobacterial NDH-1 also plays a role in inorganic carbon-concentration. In Picosynechococcus sp. (strain ATCC 27264 / PCC 7002 / PR-6) (Agmenellum quadruplicatum), this protein is NAD(P)H-quinone oxidoreductase subunit O.